The chain runs to 308 residues: Cytochrome b (308 aa).

The next 4 helical transmembrane spans lie at 1–21 (FGLLLGICLIVQIVTGLLLAA), 45–66 (WLIRNLHANGASFFFICIYLHI), 81–101 (WNIGVILLLTLMATAFVGYVL), and 146–166 (FFALHFLLPFVIAGLTLVHLT). 2 residues coordinate heme b: histidine 51 and histidine 65. Positions 150 and 164 each coordinate heme b. Histidine 169 contributes to the a ubiquinone binding site. 3 helical membrane-spanning segments follow: residues 194 to 214 (TKDMLGFALMLIPLITLALFS), 256 to 276 (LGGVLALAASVLVLFLIPLLH), and 288 to 308 (LSQILFWTLVANLLVLTWVGS).

This sequence belongs to the cytochrome b family. As to quaternary structure, the cytochrome bc1 complex contains 11 subunits: 3 respiratory subunits (MT-CYB, CYC1 and UQCRFS1), 2 core proteins (UQCRC1 and UQCRC2) and 6 low-molecular weight proteins (UQCRH/QCR6, UQCRB/QCR7, UQCRQ/QCR8, UQCR10/QCR9, UQCR11/QCR10 and a cleavage product of UQCRFS1). This cytochrome bc1 complex then forms a dimer. It depends on heme b as a cofactor.

It is found in the mitochondrion inner membrane. Its function is as follows. Component of the ubiquinol-cytochrome c reductase complex (complex III or cytochrome b-c1 complex) that is part of the mitochondrial respiratory chain. The b-c1 complex mediates electron transfer from ubiquinol to cytochrome c. Contributes to the generation of a proton gradient across the mitochondrial membrane that is then used for ATP synthesis. The sequence is that of Cytochrome b (MT-CYB) from Pomatostomus temporalis (Grey-crowned babbler).